The primary structure comprises 356 residues: Peptide chain release factor 1 (356 aa).

Position 235 is an N5-methylglutamine (glutamine 235).

The protein belongs to the prokaryotic/mitochondrial release factor family. Post-translationally, methylated by PrmC. Methylation increases the termination efficiency of RF1.

The protein localises to the cytoplasm. In terms of biological role, peptide chain release factor 1 directs the termination of translation in response to the peptide chain termination codons UAG and UAA. This Hydrogenobaculum sp. (strain Y04AAS1) protein is Peptide chain release factor 1.